Here is a 716-residue protein sequence, read N- to C-terminus: Phosphoribosylformylglycinamidine synthase subunit PurL (716 aa).

Histidine 33 is a catalytic residue. ATP is bound at residue tyrosine 36. Glutamate 77 provides a ligand contact to Mg(2+). Residues serine 78–histidine 81 and arginine 100 each bind substrate. The active-site Proton acceptor is the histidine 79. Aspartate 101 provides a ligand contact to Mg(2+). Residue glutamine 225 coordinates substrate. Aspartate 253 is a Mg(2+) binding site. Position 297-299 (glutamate 297–glutamine 299) interacts with substrate. ATP is bound by residues asparagine 475 and glycine 512. Asparagine 513 is a binding site for Mg(2+). Serine 515 lines the substrate pocket.

Belongs to the FGAMS family. Monomer. Part of the FGAM synthase complex composed of 1 PurL, 1 PurQ and 2 PurS subunits.

It localises to the cytoplasm. The catalysed reaction is N(2)-formyl-N(1)-(5-phospho-beta-D-ribosyl)glycinamide + L-glutamine + ATP + H2O = 2-formamido-N(1)-(5-O-phospho-beta-D-ribosyl)acetamidine + L-glutamate + ADP + phosphate + H(+). The protein operates within purine metabolism; IMP biosynthesis via de novo pathway; 5-amino-1-(5-phospho-D-ribosyl)imidazole from N(2)-formyl-N(1)-(5-phospho-D-ribosyl)glycinamide: step 1/2. In terms of biological role, part of the phosphoribosylformylglycinamidine synthase complex involved in the purines biosynthetic pathway. Catalyzes the ATP-dependent conversion of formylglycinamide ribonucleotide (FGAR) and glutamine to yield formylglycinamidine ribonucleotide (FGAM) and glutamate. The FGAM synthase complex is composed of three subunits. PurQ produces an ammonia molecule by converting glutamine to glutamate. PurL transfers the ammonia molecule to FGAR to form FGAM in an ATP-dependent manner. PurS interacts with PurQ and PurL and is thought to assist in the transfer of the ammonia molecule from PurQ to PurL. This is Phosphoribosylformylglycinamidine synthase subunit PurL from Methanosarcina mazei (strain ATCC BAA-159 / DSM 3647 / Goe1 / Go1 / JCM 11833 / OCM 88) (Methanosarcina frisia).